A 174-amino-acid chain; its full sequence is Phosphopantetheine adenylyltransferase (174 aa).

Residue Thr10 participates in substrate binding. Residues 10–11 (TF) and His18 each bind ATP. The substrate site is built by Lys44, Leu76, and Arg90. Residues 91–93 (GLR), Glu101, and 126–132 (HAYISSS) contribute to the ATP site.

The protein belongs to the bacterial CoaD family. As to quaternary structure, homohexamer. Mg(2+) serves as cofactor.

It localises to the cytoplasm. It catalyses the reaction (R)-4'-phosphopantetheine + ATP + H(+) = 3'-dephospho-CoA + diphosphate. Its pathway is cofactor biosynthesis; coenzyme A biosynthesis; CoA from (R)-pantothenate: step 4/5. In terms of biological role, reversibly transfers an adenylyl group from ATP to 4'-phosphopantetheine, yielding dephospho-CoA (dPCoA) and pyrophosphate. The protein is Phosphopantetheine adenylyltransferase of Alkalilimnicola ehrlichii (strain ATCC BAA-1101 / DSM 17681 / MLHE-1).